Reading from the N-terminus, the 326-residue chain is MATH domain and coiled-coil domain-containing protein At3g58370 (326 aa).

The MATH domain maps to 7-133; sequence DNKFTWVIKN…NGEVKIVVEI (127 aa). Positions 259 to 312 form a coiled coil; the sequence is LRLDWLEKKLAEVKAKKKKVETGKARLQRAEEELQKLNQKCLELKAFLEKENAD.

In Arabidopsis thaliana (Mouse-ear cress), this protein is MATH domain and coiled-coil domain-containing protein At3g58370.